Reading from the N-terminus, the 284-residue chain is 2-dehydro-3-deoxyphosphooctonate aldolase (284 aa).

Belongs to the KdsA family.

It localises to the cytoplasm. It catalyses the reaction D-arabinose 5-phosphate + phosphoenolpyruvate + H2O = 3-deoxy-alpha-D-manno-2-octulosonate-8-phosphate + phosphate. It functions in the pathway carbohydrate biosynthesis; 3-deoxy-D-manno-octulosonate biosynthesis; 3-deoxy-D-manno-octulosonate from D-ribulose 5-phosphate: step 2/3. Its pathway is bacterial outer membrane biogenesis; lipopolysaccharide biosynthesis. The sequence is that of 2-dehydro-3-deoxyphosphooctonate aldolase from Cronobacter sakazakii (strain ATCC BAA-894) (Enterobacter sakazakii).